The chain runs to 565 residues: DNA ligase B (565 aa).

The N6-AMP-lysine intermediate role is filled by Lys130.

The protein belongs to the NAD-dependent DNA ligase family. LigB subfamily.

The catalysed reaction is NAD(+) + (deoxyribonucleotide)n-3'-hydroxyl + 5'-phospho-(deoxyribonucleotide)m = (deoxyribonucleotide)n+m + AMP + beta-nicotinamide D-nucleotide.. In terms of biological role, catalyzes the formation of phosphodiester linkages between 5'-phosphoryl and 3'-hydroxyl groups in double-stranded DNA using NAD as a coenzyme and as the energy source for the reaction. The polypeptide is DNA ligase B (Yersinia enterocolitica serotype O:8 / biotype 1B (strain NCTC 13174 / 8081)).